Reading from the N-terminus, the 785-residue chain is Proprotein convertase subtilisin/kexin type 7 (785 aa).

The N-terminal stretch at 1 to 37 (MPKGRQKVPHLDAPLGLPTCLWLELAGLFLLVPWVMG) is a signal peptide. Residues 38-141 (LAGTGGPDGQ…EQRLLRRAKR (104 aa)) constitute a propeptide that is removed on maturation. At 142-667 (SVHFNDPKYP…YTITPNTLKT (526 aa)) the chain is on the extracellular side. Residues 153–473 (QWHLNNRRSP…FGLLNAWRLV (321 aa)) form the Peptidase S8 domain. N-linked (GlcNAc...) asparagine glycans are attached at residues Asn-167 and Asn-175. The active-site Charge relay system is Asp-187. The disordered stretch occupies residues 197-219 (IAPNYSPEGSYDLNSNDPDPMPH). The Charge relay system role is filled by His-228. Residue Asn-241 is glycosylated (N-linked (GlcNAc...) asparagine). Ser-406 functions as the Charge relay system in the catalytic mechanism. A P/Homo B domain is found at 481–618 (SVPYLASYVS…QLTLYGSVWS (138 aa)). Asn-511 carries an N-linked (GlcNAc...) asparagine glycan. A helical membrane pass occupies residues 668–688 (LVLVGCFTVFWTVYYMLEVYL). The Cytoplasmic segment spans residues 689–785 (SQRNVASNQV…VPHGKEEQIC (97 aa)). Residues 700–751 (RSGPCHWPHRSRKAKEEGTELESVPLCSSKDPDEVETESRGPPTTSDLLAPD) are disordered.

Belongs to the peptidase S8 family. Ca(2+) serves as cofactor. Post-translationally, cysteine residues in the cytoplasmic tail are probably palmitoylated. N-glycosylated. As to expression, expressed in spleen, thymus, prostate, testis, ovary, small intestine, colon and peripheral blood leukocyte.

It is found in the golgi apparatus. The protein localises to the trans-Golgi network membrane. Its activity is regulated as follows. Inhibited by zinc and copper. In terms of biological role, serine endoprotease that processes various proproteins by cleavage at paired basic amino acids, recognizing the RXXX[KR]R consensus motif. Likely functions in the constitutive secretory pathway. The polypeptide is Proprotein convertase subtilisin/kexin type 7 (PCSK7) (Homo sapiens (Human)).